The chain runs to 249 residues: Segregation and condensation protein A (249 aa).

Belongs to the ScpA family. As to quaternary structure, component of a cohesin-like complex composed of ScpA, ScpB and the Smc homodimer, in which ScpA and ScpB bind to the head domain of Smc. The presence of the three proteins is required for the association of the complex with DNA.

The protein resides in the cytoplasm. Its function is as follows. Participates in chromosomal partition during cell division. May act via the formation of a condensin-like complex containing Smc and ScpB that pull DNA away from mid-cell into both cell halves. In Listeria welshimeri serovar 6b (strain ATCC 35897 / DSM 20650 / CCUG 15529 / CIP 8149 / NCTC 11857 / SLCC 5334 / V8), this protein is Segregation and condensation protein A.